Here is a 276-residue protein sequence, read N- to C-terminus: Small ribosomal subunit protein uS3 (276 aa).

Positions 17–86 constitute a KH type-2 domain; it reads VDEYLAKELD…NPQIDVQDVG (70 aa). Residues 193 to 276 form a disordered region; that stretch reads FQINAPPKEP…AETHGDIQDR (84 aa). Low complexity predominate over residues 214 to 227; the sequence is EAEPSQAAETQEQQ. Composition is skewed to basic and acidic residues over residues 228–240 and 258–276; these read AGEK…RLLD and PESR…IQDR.

Belongs to the universal ribosomal protein uS3 family. As to quaternary structure, part of the 30S ribosomal subunit.

Binds the lower part of the 30S subunit head. In Methanothrix thermoacetophila (strain DSM 6194 / JCM 14653 / NBRC 101360 / PT) (Methanosaeta thermophila), this protein is Small ribosomal subunit protein uS3.